Consider the following 349-residue polypeptide: MYTPIPQSGSPFPASVQDPGLHIWRVEKLKPVPIARENHGIFFSGDSYLVLHNGPEEASHLHLWIGQQSSRDEQGACAVLAVHLNTLLGERPVQHREVQGNESDLFMSYFPQGLKYREGGVESAFHKTTSGTTPAAIRKLYQVKGKKNIRATERALSWDSFNTGDCFILDLGQNIFAWCGGKSNILERNKARDLALAIRDSERQGKAQVEIITDGEEPAEMIQVLGPKPALKEGNPEEDITADQTNAQAAALYKVSDATGQMNLTKVADSSPFASELLIPDDCFVLDNGLCGKIYIWKGRKANEKERQAALQVADGFISRMRYSPNTQVEILPQGRESPIFKQFFKDWK.

An N-acetylmethionine modification is found at methionine 1. 3 Gelsolin-like repeats span residues 28-107, 147-222, and 264-342; these read KLKP…DLFM, KNIR…AEMI, and LTKV…PIFK. The Nuclear localization signal motif lies at 138 to 147; that stretch reads RKLYQVKGKK. At serine 338 the chain carries Phosphoserine.

It belongs to the villin/gelsolin family. In terms of assembly, interacts with NUP62. Interacts with NUTF2 and RAN; involved in CAPG nuclear import. Post-translationally, phosphorylated.

The protein localises to the nucleus. The protein resides in the cytoplasm. Its subcellular location is the melanosome. It localises to the cell projection. It is found in the lamellipodium. The protein localises to the ruffle. Its function is as follows. Calcium-sensitive protein which reversibly blocks the barbed ends of actin filaments but does not sever preformed actin filaments. May play an important role in macrophage function. May play a role in regulating cytoplasmic and/or nuclear structures through potential interactions with actin. May bind DNA. Uncapping occurs either when Ca(2+) falls or when the concentration of polyphosphoinositide rises, both at low and high Ca(2+). This chain is Macrophage-capping protein (Capg), found in Rattus norvegicus (Rat).